A 219-amino-acid chain; its full sequence is Protein OPG170 (219 aa).

A signal peptide spans 1–16 (MYSLVFVILMCIPFSF). Residue Asn-70 is glycosylated (N-linked (GlcNAc...) asparagine; by host).

It belongs to the orthopoxvirus OPG170 family.

Its subcellular location is the secreted. May interact with several cellular chemokines to interfere with chemokine-glycosaminoglycan (GAG) interactions at the cell surface to alter chemotaxis of nearby responsive cells. This chain is Protein OPG170 (OPG170), found in Bos taurus (Bovine).